We begin with the raw amino-acid sequence, 255 residues long: uncharacterized protein (255 aa).

NADP(+) contacts are provided by Ile13, Arg37, Asp55, Asn81, Tyr148, Lys152, Val180, and Thr182. Tyr148 acts as the Proton donor in catalysis. The Lowers pKa of active site Tyr role is filled by Lys152.

This sequence belongs to the short-chain dehydrogenases/reductases (SDR) family.

Involved in osmoadaptation. This is an uncharacterized protein from Emericella nidulans (strain FGSC A4 / ATCC 38163 / CBS 112.46 / NRRL 194 / M139) (Aspergillus nidulans).